We begin with the raw amino-acid sequence, 241 residues long: uncharacterized protein (241 aa).

Residues 78 to 80, Gly-111, Ile-131, and 138 to 140 contribute to the S-adenosyl-L-methionine site; these read TSA and SSL.

The protein belongs to the class IV-like SAM-binding methyltransferase superfamily. RNA methyltransferase TrmH family.

This is an uncharacterized protein from Haemophilus influenzae (strain ATCC 51907 / DSM 11121 / KW20 / Rd).